We begin with the raw amino-acid sequence, 506 residues long: Tabersonine 3-oxygenase (506 aa).

Topologically, residues 1-5 (MEFHE) are lumenal. Residues 6–26 (SSPFVFITRGFIFIAISIAVL) traverse the membrane as a helical segment. Residues 27–506 (RRIISKKTKT…DLQLIATSYA (480 aa)) lie on the Cytoplasmic side of the membrane. Heme is bound at residue cysteine 450.

Belongs to the cytochrome P450 family. The cofactor is heme. In terms of tissue distribution, expressed in leaf epidermis.

The protein resides in the endoplasmic reticulum membrane. It carries out the reaction 16-methoxytabersonine + reduced [NADPH--hemoprotein reductase] + O2 = (3R)-1,2-didehydro-3-hydroxy-16-methoxy-2,3-dihydrotabersonine + oxidized [NADPH--hemoprotein reductase] + H2O + H(+). The catalysed reaction is (-)-tabersonine + reduced [NADPH--hemoprotein reductase] + O2 = (3R)-1,2-didehydro-3-hydroxy-2,3-dihydrotabersonine + oxidized [NADPH--hemoprotein reductase] + H2O + H(+). It functions in the pathway alkaloid biosynthesis; vindoline biosynthesis. Functionally, cytochrome P450 catalyzing the monooxygenation of 16-methoxytabersonine, 16-hydroxytabersonine and tabersonine, but not of 2,3-dihydrotabersonine. Converts the C2,C3 alkene of tabersonine and 16-methoxytabersonine to the epoxides, which then spontaneously open to form the corresponding imine alcohols. Inactive in converting amyrin to ursolic acid. In Catharanthus roseus (Madagascar periwinkle), this protein is Tabersonine 3-oxygenase.